The chain runs to 218 residues: Pyridoxal 5'-phosphate synthase subunit PdxT (218 aa).

Gly-54 to Ser-56 is an L-glutamine binding site. The Nucleophile role is filled by Cys-86. Residues Arg-120 and Ile-149–Arg-150 each bind L-glutamine. Catalysis depends on charge relay system residues His-197 and Glu-199.

It belongs to the glutaminase PdxT/SNO family. In terms of assembly, in the presence of PdxS, forms a dodecamer of heterodimers. Only shows activity in the heterodimer.

It catalyses the reaction aldehydo-D-ribose 5-phosphate + D-glyceraldehyde 3-phosphate + L-glutamine = pyridoxal 5'-phosphate + L-glutamate + phosphate + 3 H2O + H(+). The enzyme catalyses L-glutamine + H2O = L-glutamate + NH4(+). It participates in cofactor biosynthesis; pyridoxal 5'-phosphate biosynthesis. In terms of biological role, catalyzes the hydrolysis of glutamine to glutamate and ammonia as part of the biosynthesis of pyridoxal 5'-phosphate. The resulting ammonia molecule is channeled to the active site of PdxS. The polypeptide is Pyridoxal 5'-phosphate synthase subunit PdxT (Saccharopolyspora erythraea (strain ATCC 11635 / DSM 40517 / JCM 4748 / NBRC 13426 / NCIMB 8594 / NRRL 2338)).